The following is a 140-amino-acid chain: Cell division protein SepF (140 aa).

The disordered stretch occupies residues 15-47; the sequence is DSQYEEPTEASQAAAPTESATNTRSTPKVVPMQ.

Belongs to the SepF family. Homodimer. Interacts with FtsZ.

It localises to the cytoplasm. Its function is as follows. Cell division protein that is part of the divisome complex and is recruited early to the Z-ring. Probably stimulates Z-ring formation, perhaps through the cross-linking of FtsZ protofilaments. Its function overlaps with FtsA. This is Cell division protein SepF from Lactiplantibacillus plantarum (strain ATCC BAA-793 / NCIMB 8826 / WCFS1) (Lactobacillus plantarum).